Here is a 193-residue protein sequence, read N- to C-terminus: Ion-translocating oxidoreductase complex subunit A (193 aa).

The next 6 helical transmembrane spans lie at 5–25 (LLILVSTILVNNFVLVQFLGL), 38–58 (AMGMSLATTFVLTLSSLCSYL), 65–85 (APLGMEFLKTITFILVIAVVV), 102–122 (VLGIFLPLITTNCAVLGVALL), 134–154 (ILYGFGAAVGFSLVLTLFSAM), and 171–191 (AIGMITAGLMSLAFLGFTGLV).

This sequence belongs to the NqrDE/RnfAE family. In terms of assembly, the complex is composed of six subunits: RnfA, RnfB, RnfC, RnfD, RnfE and RnfG.

The protein resides in the cell inner membrane. Functionally, part of a membrane-bound complex that couples electron transfer with translocation of ions across the membrane. The protein is Ion-translocating oxidoreductase complex subunit A of Hahella chejuensis (strain KCTC 2396).